The primary structure comprises 168 residues: ATP synthase F(1) complex subunit delta, mitochondrial (168 aa).

The N-terminal 22 residues, 1 to 22 (MLPSALLRRPGLGRLVRQVRLY), are a transit peptide targeting the mitochondrion. Residues Lys136 and Lys165 each carry the N6-acetyllysine; alternate modification. N6-succinyllysine; alternate occurs at positions 136 and 165.

It belongs to the ATPase epsilon chain family. In terms of assembly, component of the ATP synthase complex composed at least of ATP5F1A/subunit alpha, ATP5F1B/subunit beta, ATP5MC1/subunit c (homooctomer), MT-ATP6/subunit a, MT-ATP8/subunit 8, ATP5ME/subunit e, ATP5MF/subunit f, ATP5MG/subunit g, ATP5MK/subunit k, ATP5MJ/subunit j, ATP5F1C/subunit gamma, ATP5F1D/subunit delta, ATP5F1E/subunit epsilon, ATP5PF/subunit F6, ATP5PB/subunit b, ATP5PD/subunit d, ATP5PO/subunit OSCP. ATP synthase complex consists of a soluble F(1) head domain (subunits alpha(3) and beta(3)) - the catalytic core - and a membrane F(0) domain - the membrane proton channel (subunits c, a, 8, e, f, g, k and j). These two domains are linked by a central stalk (subunits gamma, delta, and epsilon) rotating inside the F1 region and a stationary peripheral stalk (subunits F6, b, d, and OSCP). Component of a complex composed at least by ATPIF1, ATP5F1A, ATP5F1B, ATP5F1C AND ATP5F1E.

It is found in the mitochondrion. The protein resides in the mitochondrion inner membrane. Its function is as follows. Subunit delta, of the mitochondrial membrane ATP synthase complex (F(1)F(0) ATP synthase or Complex V) that produces ATP from ADP in the presence of a proton gradient across the membrane which is generated by electron transport complexes of the respiratory chain. ATP synthase complex consist of a soluble F(1) head domain - the catalytic core - and a membrane F(1) domain - the membrane proton channel. These two domains are linked by a central stalk rotating inside the F(1) region and a stationary peripheral stalk. During catalysis, ATP synthesis in the catalytic domain of F(1) is coupled via a rotary mechanism of the central stalk subunits to proton translocation. In vivo, can only synthesize ATP although its ATP hydrolase activity can be activated artificially in vitro. With the central stalk subunit gamma, is essential for the biogenesis of F(1) catalytic part of the ATP synthase complex namely in the formation of F1 assembly intermediate. In Bos taurus (Bovine), this protein is ATP synthase F(1) complex subunit delta, mitochondrial.